The chain runs to 164 residues: Phosphopantetheine adenylyltransferase (164 aa).

Serine 9 serves as a coordination point for substrate. ATP is bound by residues 9–10 and histidine 17; that span reads SF. Substrate-binding residues include lysine 41, leucine 73, and lysine 87. Residues 88–90, glutamate 98, and 122–128 each bind ATP; these read GLR and YSYLSSS.

Belongs to the bacterial CoaD family. As to quaternary structure, homohexamer. Mg(2+) is required as a cofactor.

Its subcellular location is the cytoplasm. The catalysed reaction is (R)-4'-phosphopantetheine + ATP + H(+) = 3'-dephospho-CoA + diphosphate. It participates in cofactor biosynthesis; coenzyme A biosynthesis; CoA from (R)-pantothenate: step 4/5. Functionally, reversibly transfers an adenylyl group from ATP to 4'-phosphopantetheine, yielding dephospho-CoA (dPCoA) and pyrophosphate. The sequence is that of Phosphopantetheine adenylyltransferase from Rhodococcus erythropolis (strain PR4 / NBRC 100887).